We begin with the raw amino-acid sequence, 246 residues long: MNDRIIDFDPLIEGVLIKRYKRYLADIALESGEVVTAHCANTGPMKGLLREGAKVRISVSTSPKRKLPFTWEQICVLDEKNEEVWVGINTLFANKLIKKVIEKNLLDEIIGEIETIKSEVPYGKDKKSRIDFFLTPKSSNPDKRNIYIEVKNTTWIRGNVALFPDTVTKRGQKHLIELKELIPESKSVLVLCITRKDACFFAPGDEADPLYGNLFRESLSAGMITIPCSFEFHKDHISWRGIKPLK.

Belongs to the SfsA family.

The chain is Sugar fermentation stimulation protein homolog from Prochlorococcus marinus (strain MIT 9301).